The sequence spans 184 residues: Tumor necrosis factor alpha-induced protein 8-like protein 2 (184 aa).

Belongs to the TNFAIP8 family. TNFAIP8L2 subfamily. May interact with CASP8; however, such result is unclear since could not reproduce the interaction with CASP8. Interacts with RAC1. Post-translationally, ubiquitinated in a BTRC-depdent manner; leading to degradation mediated through the proteasome pathway.

Its subcellular location is the cytoplasm. It localises to the nucleus. The protein localises to the lysosome. Acts as a negative regulator of innate and adaptive immunity by maintaining immune homeostasis. Plays a regulatory role in the Toll-like signaling pathway by determining the strength of LPS-induced signaling and gene expression. Inhibits TCR-mediated T-cell activation and negatively regulate T-cell function to prevent hyperresponsiveness. Also inhibits autolysosome formation via negatively modulating MTOR activation by interacting with RAC1 and promoting the disassociation of the RAC1-MTOR complex. Plays an essential role in NK-cell biology by acting as a checkpoint and displaying an expression pattern correlating with NK-cell maturation process and by negatively regulating NK-cell maturation and antitumor immunity. Mechanistically, suppresses IL-15-triggered mTOR activity in NK-cells. This chain is Tumor necrosis factor alpha-induced protein 8-like protein 2 (TNFAIP8L2), found in Rhinolophus ferrumequinum (Greater horseshoe bat).